Reading from the N-terminus, the 302-residue chain is Pyridoxal 5'-phosphate synthase subunit PdxS (302 aa).

D-ribose 5-phosphate is bound at residue aspartate 32. The active-site Schiff-base intermediate with D-ribose 5-phosphate is lysine 89. D-ribose 5-phosphate is bound at residue glycine 161. Arginine 173 contributes to the D-glyceraldehyde 3-phosphate binding site. Residues glycine 222 and 243–244 each bind D-ribose 5-phosphate; that span reads GS. Residues 275–302 form a disordered region; the sequence is IAKNPGKGMKGQANADLDEEEQLQGRGV.

Belongs to the PdxS/SNZ family. As to quaternary structure, in the presence of PdxT, forms a dodecamer of heterodimers.

The catalysed reaction is aldehydo-D-ribose 5-phosphate + D-glyceraldehyde 3-phosphate + L-glutamine = pyridoxal 5'-phosphate + L-glutamate + phosphate + 3 H2O + H(+). The protein operates within cofactor biosynthesis; pyridoxal 5'-phosphate biosynthesis. In terms of biological role, catalyzes the formation of pyridoxal 5'-phosphate from ribose 5-phosphate (RBP), glyceraldehyde 3-phosphate (G3P) and ammonia. The ammonia is provided by the PdxT subunit. Can also use ribulose 5-phosphate and dihydroxyacetone phosphate as substrates, resulting from enzyme-catalyzed isomerization of RBP and G3P, respectively. This Haloarcula marismortui (strain ATCC 43049 / DSM 3752 / JCM 8966 / VKM B-1809) (Halobacterium marismortui) protein is Pyridoxal 5'-phosphate synthase subunit PdxS.